A 97-amino-acid polypeptide reads, in one-letter code: Putative defensin-like protein 237 (97 aa).

Positions M1 to G23 are cleaved as a signal peptide. Disulfide bonds link C30–C94, C40–C71, C48–C84, and C69–C86.

The protein belongs to the DEFL family.

The protein localises to the secreted. This is Putative defensin-like protein 237 (SCRL21) from Arabidopsis thaliana (Mouse-ear cress).